Here is a 495-residue protein sequence, read N- to C-terminus: Beta-galactoside alpha-2,6-sialyltransferase 2 (495 aa).

At 1–10 the chain is on the cytoplasmic side; sequence MKPHLKQWRQ. A helical; Signal-anchor for type II membrane protein transmembrane segment spans residues 11–31; that stretch reads GMLCGVFAWGLFFVVIFLYFT. At 32–495 the chain is on the lumenal side; that stretch reads DSSPAKPAPS…LQAVRCPPGA (464 aa). 2 disordered regions span residues 63–90 and 107–165; these read GASE…LRTW and GRTS…EDGE. Residues 134 to 143 show a composition bias toward low complexity; it reads PEGARPPRAA. Basic residues predominate over residues 144–153; sequence PGRRAKRGPR. Cystine bridges form between C225/C491, C268/C420, and C438/C449. Residues N279 and N309 are each glycosylated (N-linked (GlcNAc...) asparagine).

This sequence belongs to the glycosyltransferase 29 family.

The protein resides in the golgi apparatus. It is found in the golgi stack membrane. It carries out the reaction a beta-D-galactoside + CMP-N-acetyl-beta-neuraminate = an N-acetyl-alpha-neuraminyl-(2-&gt;6)-beta-D-galactosyl derivative + CMP + H(+). In terms of biological role, transfers sialic acid from the donor of substrate CMP-sialic acid to galactose containing acceptor substrates. Has alpha-2,6-sialyltransferase activity toward oligosaccharides that have the Gal-beta-1,4-GlcNAc sequence at the non-reducing end of their carbohydrate groups, but it has weak or no activities toward glycoproteins and glycolipids. The polypeptide is Beta-galactoside alpha-2,6-sialyltransferase 2 (ST6GAL2) (Bos taurus (Bovine)).